A 265-amino-acid polypeptide reads, in one-letter code: MLMIISPAKTLDYTSPLAIQRYTQPQMLAQAETLMQTVRTLTPAQLGSLMKISDKLAGLNAARFTEWQPSFTPENARQAILAFKGDVYTGLQAETFSEQDFDFAQRHLCMLSGLYGVLRPLDLMMPYRLEMGTRLHTPYGNDLYAFWGDSITRQINQQLLQQGDRVVVNLASDEYFKAVRPAALEGELIKPIFMDEKNGSMKVISFYAKKARGMMSRFIIQARLREPEQLKAFDLEGYAFAGETQGRQGRELLFTRRHSAISPAR.

It belongs to the UPF0246 family.

The polypeptide is UPF0246 protein NT01EI_0662 (Edwardsiella ictaluri (strain 93-146)).